The sequence spans 365 residues: Putative agmatine deiminase (365 aa).

C356 serves as the catalytic Amidino-cysteine intermediate.

It belongs to the agmatine deiminase family.

The enzyme catalyses agmatine + H2O = N-carbamoylputrescine + NH4(+). This Latilactobacillus sakei subsp. sakei (strain 23K) (Lactobacillus sakei subsp. sakei) protein is Putative agmatine deiminase.